A 517-amino-acid polypeptide reads, in one-letter code: Glycerol kinase 5 (517 aa).

ATP is bound by residues serine 23 and threonine 24. 3 residues coordinate glycerol: arginine 93, aspartate 270, and glutamine 271. 3 residues coordinate ATP: threonine 292, glycine 335, and glycine 432.

Belongs to the FGGY kinase family.

Its subcellular location is the cytoplasm. It catalyses the reaction glycerol + ATP = sn-glycerol 3-phosphate + ADP + H(+). The protein operates within polyol metabolism; glycerol degradation via glycerol kinase pathway; sn-glycerol 3-phosphate from glycerol: step 1/1. Skin-specific kinase that plays a key role in glycerol metabolism, catalyzing its phosphorylation to produce sn-glycerol 3-phosphate. Involved in skin-specific regulation of sterol regulatory element-binding protein (SREBP) processing and lipid biosynthesis. The protein is Glycerol kinase 5 (GK5) of Gallus gallus (Chicken).